The chain runs to 70 residues: Small ribosomal subunit protein bS21 (70 aa).

It belongs to the bacterial ribosomal protein bS21 family.

This chain is Small ribosomal subunit protein bS21, found in Laribacter hongkongensis (strain HLHK9).